A 201-amino-acid chain; its full sequence is Imidazole glycerol phosphate synthase subunit HisH (201 aa).

One can recognise a Glutamine amidotransferase type-1 domain in the interval 2 to 201; sequence KVVILDTGCA…ARLLKNFLEM (200 aa). Cysteine 77 functions as the Nucleophile in the catalytic mechanism. Catalysis depends on residues histidine 183 and glutamate 185.

As to quaternary structure, heterodimer of HisH and HisF.

It localises to the cytoplasm. The enzyme catalyses 5-[(5-phospho-1-deoxy-D-ribulos-1-ylimino)methylamino]-1-(5-phospho-beta-D-ribosyl)imidazole-4-carboxamide + L-glutamine = D-erythro-1-(imidazol-4-yl)glycerol 3-phosphate + 5-amino-1-(5-phospho-beta-D-ribosyl)imidazole-4-carboxamide + L-glutamate + H(+). It catalyses the reaction L-glutamine + H2O = L-glutamate + NH4(+). Its pathway is amino-acid biosynthesis; L-histidine biosynthesis; L-histidine from 5-phospho-alpha-D-ribose 1-diphosphate: step 5/9. IGPS catalyzes the conversion of PRFAR and glutamine to IGP, AICAR and glutamate. The HisH subunit catalyzes the hydrolysis of glutamine to glutamate and ammonia as part of the synthesis of IGP and AICAR. The resulting ammonia molecule is channeled to the active site of HisF. The protein is Imidazole glycerol phosphate synthase subunit HisH of Photorhabdus laumondii subsp. laumondii (strain DSM 15139 / CIP 105565 / TT01) (Photorhabdus luminescens subsp. laumondii).